A 234-amino-acid chain; its full sequence is LexA repressor (234 aa).

Positions 41–61 form a DNA-binding region, H-T-H motif; sequence RAEIANELGFKSANAAEEHLQ. Active-site for autocatalytic cleavage activity residues include Ser152 and Lys189.

Belongs to the peptidase S24 family. As to quaternary structure, homodimer.

The enzyme catalyses Hydrolysis of Ala-|-Gly bond in repressor LexA.. Its function is as follows. Represses a number of genes involved in the response to DNA damage (SOS response), including recA and lexA. In the presence of single-stranded DNA, RecA interacts with LexA causing an autocatalytic cleavage which disrupts the DNA-binding part of LexA, leading to derepression of the SOS regulon and eventually DNA repair. In Polaromonas sp. (strain JS666 / ATCC BAA-500), this protein is LexA repressor.